The following is a 101-amino-acid chain: MDKSKRLFLKSKRSFRRRLPPIQSGDRIDYRNMSLISRFISEQGKILSRRVNRLTLKQQRLITIAIKQARILSSLPFLNNEKQFERSESTTRTTALRTRNK.

The protein belongs to the bacterial ribosomal protein bS18 family. As to quaternary structure, part of the 30S ribosomal subunit.

The protein resides in the plastid. Its subcellular location is the chloroplast. The protein is Small ribosomal subunit protein bS18c of Gossypium hirsutum (Upland cotton).